Consider the following 307-residue polypeptide: Ras-related protein Rab-33 (307 aa).

The segment at 19 to 80 (VIDPPKHVTA…IPPAPEAVTA (62 aa)) is disordered. 2 stretches are compositionally biased toward pro residues: residues 42 to 56 (PTHPSAPQDPSPAVP) and 65 to 75 (PTAPPPIPPAP). Position 107-114 (107-114 (GNAAVGKT)) interacts with GTP. An Effector region motif is present at residues 129 to 137 (TEATIGVDF). Residues 155 to 159 (DTAGQ) and 217 to 220 (NKCD) contribute to the GTP site. 2 S-geranylgeranyl cysteine lipidation sites follow: Cys306 and Cys307.

It belongs to the small GTPase superfamily. Rab family.

Its subcellular location is the cell membrane. This Caenorhabditis elegans protein is Ras-related protein Rab-33 (rab-33).